An 831-amino-acid chain; its full sequence is MRVPVSWLREYVALPAEATARELADKLISLGLEVETVEEVGADISGPIVVGRVLTIEELTGFKKPIRFCTVDVGDANGTGEPQGIICGARNFAEGDLVVVSLPGAVLPGGFAISARKTYGRMSEGMICSASELGLWEDHEGIIVLPEGFAEPGTKADDLLGLRESVLDIAVTPDRGYALSLRGIAREVAAAYGVEFTDPAVRPLPSAAEGGYPASVADPAICSRYVLRGVTGFDPAAPTPLWMRRRLHLCGVRSISLAVDITNYVMLELGQPLHAWDRSTLRGPIEVRLARPGEKLETLDHVVRALDPDDILITDESGPINIAGVMGGLSTEIRETSTDILIEAAHFDAAHIARTSRRHQLSSESSRRFERGVDTDIQLAAATRAVELLAELGGATIEDGITHIDHTVPREPIVVRAGHAGRVAGVDYPVETEIARLRQVGCEVVQEGDTLKVTPPSWRPDLTDPNDLAEEVIRNEGYENIPALLPQAPPGRGLTRGQRLRRAVGRTLADRGFFEVLNYPFVGVRDFDRLRLDEDDARRTAVRLANPLNDDEPLLRTTLLPGLFKALVRNVGRGFTDIALFEMGLVYHPKPDAPAKAPILPVDRAPTAEERATLEAALPEQPRHIGAVLAGQRLRSGWWGGGEPATWADAIHTAKEAASVAGVELIVRAAQYAPWHPGRCAALYVADGDREVLVGHAGELHPRVIKAYGLPSRTSALEIDWDRIEAAAAAATAPQISTYPVATQDVALVVDASVPAAEVEAALREGAGELLESVRLFDVYTGDQVGEGRKSLAYALRLRAHDRTLTVEETNRIKDAAVAAAAERTGAVLRG.

The tRNA-binding domain maps to 42-157 (ADISGPIVVG…GFAEPGTKAD (116 aa)). Residues 408 to 483 (VPREPIVVRA…RNEGYENIPA (76 aa)) enclose the B5 domain. Aspartate 461, aspartate 467, glutamate 470, and glutamate 471 together coordinate Mg(2+). The FDX-ACB domain maps to 737–830 (STYPVATQDV…AAERTGAVLR (94 aa)).

Belongs to the phenylalanyl-tRNA synthetase beta subunit family. Type 1 subfamily. Tetramer of two alpha and two beta subunits. It depends on Mg(2+) as a cofactor.

The protein resides in the cytoplasm. It carries out the reaction tRNA(Phe) + L-phenylalanine + ATP = L-phenylalanyl-tRNA(Phe) + AMP + diphosphate + H(+). The chain is Phenylalanine--tRNA ligase beta subunit from Thermobifida fusca (strain YX).